Here is a 512-residue protein sequence, read N- to C-terminus: Putative ankyrin repeat protein FPV233 (512 aa).

ANK repeat units follow at residues 45–73, 77–106, 136–168, 172–201, 205–236, 238–262, 266–296, and 301–329; these read IPFIPLHQAIEARNIDIIKSIITVDNVNQ, DDTYPIHIICKEPNMLAISYMLRSINQCSV, IQDIDLKYIDKKSKDDIIEITKLLFSYGADINM, HGNSPLHYATENPDQRLTRLLLSKGANPNI, TNKSPLYYSIESDNPDITMLLIDKFIFNNTDP, LSHAIKHYRKPILHALIENGASINA, YGNTPLHYAVSYCKDIDVIKLLLERGVDVNA, and RNLTPLHSSYLKSPRVLKLLLQYGADINS.

In Vertebrata (FPV), this protein is Putative ankyrin repeat protein FPV233.